A 1197-amino-acid chain; its full sequence is uncharacterized protein (1197 aa).

This is an uncharacterized protein from Sinorhizobium fredii (strain NBRC 101917 / NGR234).